The chain runs to 146 residues: Hemoglobin subunit beta (146 aa).

Val1 bears the N-acetylvaline mark. In terms of domain architecture, Globin spans 2 to 146; the sequence is HLTGEEKAAV…VANALAHKYH (145 aa). Phosphothreonine is present on Thr12. Ser44 is modified (phosphoserine). Position 59 is an N6-acetyllysine (Lys59). His63 is a heme b binding site. Lys82 bears the N6-acetyllysine mark. Residue His92 coordinates heme b. Cys93 bears the S-nitrosocysteine mark. An N6-acetyllysine modification is found at Lys144.

It belongs to the globin family. As to quaternary structure, heterotetramer of two alpha chains and two beta chains. In terms of tissue distribution, red blood cells.

Functionally, involved in oxygen transport from the lung to the various peripheral tissues. The sequence is that of Hemoglobin subunit beta (HBB) from Aotus trivirgatus (Three-striped night monkey).